A 297-amino-acid polypeptide reads, in one-letter code: Cyclin-dependent kinase 1 (297 aa).

The 284-residue stretch at 4-287 (FEKIEKIGEG…AKDILEHPYF (284 aa)) folds into the Protein kinase domain. ATP-binding positions include 10 to 18 (IGEGTYGVV) and lysine 33. Threonine 14 is subject to Phosphothreonine. Position 15 is a phosphotyrosine (tyrosine 15). Aspartate 128 functions as the Proton acceptor in the catalytic mechanism. Position 160 is a phosphotyrosine (tyrosine 160). Residue threonine 161 is modified to Phosphothreonine; by CAK.

Belongs to the protein kinase superfamily. CMGC Ser/Thr protein kinase family. CDC2/CDKX subfamily. As to quaternary structure, forms a stable but non-covalent complex with a regulatory subunit and with a cyclin. Component of the Frs-CycA-Cdk1 complex composed of Cdk1, CycA and Z600.

The protein resides in the nucleus. The enzyme catalyses L-seryl-[protein] + ATP = O-phospho-L-seryl-[protein] + ADP + H(+). The catalysed reaction is L-threonyl-[protein] + ATP = O-phospho-L-threonyl-[protein] + ADP + H(+). It carries out the reaction [DNA-directed RNA polymerase] + ATP = phospho-[DNA-directed RNA polymerase] + ADP + H(+). Phosphorylation at Thr-14 or Tyr-15 inactivates the enzyme, while phosphorylation at Thr-161 activates it. Functionally, plays a key role in the control of the eukaryotic cell cycle. Required for entry into S-phase and mitosis. In embryos, promotes the release of Rif1 from chromatin during mid-blastula transition. p34 is a component of the kinase complex that phosphorylates the repetitive C-terminus of RNA polymerase II. This is Cyclin-dependent kinase 1 from Drosophila melanogaster (Fruit fly).